The sequence spans 268 residues: Thiazole synthase (268 aa).

Catalysis depends on lysine 111, which acts as the Schiff-base intermediate with DXP. Residues glycine 172, 198-199, and 220-221 contribute to the 1-deoxy-D-xylulose 5-phosphate site; these read AG and NT.

It belongs to the ThiG family. As to quaternary structure, homotetramer. Forms heterodimers with either ThiH or ThiS.

It is found in the cytoplasm. The catalysed reaction is [ThiS sulfur-carrier protein]-C-terminal-Gly-aminoethanethioate + 2-iminoacetate + 1-deoxy-D-xylulose 5-phosphate = [ThiS sulfur-carrier protein]-C-terminal Gly-Gly + 2-[(2R,5Z)-2-carboxy-4-methylthiazol-5(2H)-ylidene]ethyl phosphate + 2 H2O + H(+). It functions in the pathway cofactor biosynthesis; thiamine diphosphate biosynthesis. Catalyzes the rearrangement of 1-deoxy-D-xylulose 5-phosphate (DXP) to produce the thiazole phosphate moiety of thiamine. Sulfur is provided by the thiocarboxylate moiety of the carrier protein ThiS. In vitro, sulfur can be provided by H(2)S. This is Thiazole synthase from Caulobacter sp. (strain K31).